The sequence spans 21 residues: Ocellatin-4 (21 aa).

Position 21 is an isoleucine amide (I21).

Expressed by the skin dorsal glands.

It is found in the secreted. Functionally, has hemolytic activity against human erythrocytes (HC50=14.3 uM). Has antibacterial activity against the Gram-positive bacterium S.aureus ATCC 25923 (MIC=64 uM) and the Gram-negative bacterium E.coli ATCC 25922 (MIC=64 uM). The protein is Ocellatin-4 of Leptodactylus ocellatus (Argus frog).